A 218-amino-acid polypeptide reads, in one-letter code: Ohanin-like protein (218 aa).

Positions 1–40 (MSPSAGFQFSLYFLQTKKVLWKLTGLCYILLFTLCFFADQ) are cleaved as a signal peptide. The propeptide occupies 41–48 (ENGGKALA). One can recognise a B30.2/SPRY domain in the interval 49–155 (SPPGIWKRAD…RIWQTGLWWL (107 aa)). The propeptide occupies 156–218 (RHLETDPGRV…LGGTVSLTTL (63 aa)).

This sequence belongs to the ohanin/vespryn family. As to expression, expressed by the venom gland.

It is found in the secreted. Functionally, neurotoxin that produces dose-dependent hypolocomotion and hyperalgesia in mice. May directly act on the central nervous system, as it is 6500-fold more potent when administered intracerebroventricularly than intraperitoneal. In Lachesis muta muta (Bushmaster), this protein is Ohanin-like protein.